We begin with the raw amino-acid sequence, 295 residues long: uncharacterized protein (295 aa).

This is an uncharacterized protein from Methanocaldococcus jannaschii (strain ATCC 43067 / DSM 2661 / JAL-1 / JCM 10045 / NBRC 100440) (Methanococcus jannaschii).